We begin with the raw amino-acid sequence, 243 residues long: Proteasome subunit beta (243 aa).

The tract at residues 1–40 (MRTPMNNDISGRPDSLNGDRSDVFSPELGEFPNADDRAND) is disordered. The propeptide at 1 to 49 (MRTPMNNDISGRPDSLNGDRSDVFSPELGEFPNADDRANDIGDMETKTG) is removed in mature form; by autocatalysis. The active-site Nucleophile is T50.

Belongs to the peptidase T1B family. As to quaternary structure, the 20S proteasome core is composed of 14 alpha and 14 beta subunits that assemble into four stacked heptameric rings, resulting in a barrel-shaped structure. The two inner rings, each composed of seven catalytic beta subunits, are sandwiched by two outer rings, each composed of seven alpha subunits. The catalytic chamber with the active sites is on the inside of the barrel. Has a gated structure, the ends of the cylinder being occluded by the N-termini of the alpha-subunits. Is capped at one or both ends by the proteasome regulatory ATPase, PAN.

The protein resides in the cytoplasm. The enzyme catalyses Cleavage of peptide bonds with very broad specificity.. With respect to regulation, the formation of the proteasomal ATPase PAN-20S proteasome complex, via the docking of the C-termini of PAN into the intersubunit pockets in the alpha-rings, triggers opening of the gate for substrate entry. Interconversion between the open-gate and close-gate conformations leads to a dynamic regulation of the 20S proteasome proteolysis activity. Functionally, component of the proteasome core, a large protease complex with broad specificity involved in protein degradation. The polypeptide is Proteasome subunit beta (Haloquadratum walsbyi (strain DSM 16790 / HBSQ001)).